Here is a 593-residue protein sequence, read N- to C-terminus: Chromodomain Y-like protein (593 aa).

Positions 1-14 (MGIGNSQPNSQEAQ) are enriched in polar residues. Residues 1–30 (MGIGNSQPNSQEAQLCTLPEKAEQPTDDNT) form a disordered region. Positions 56–116 (TQVESIVDKR…RHNERQKEGS (61 aa)) constitute a Chromo domain. The segment at 56–304 (TQVESIVDKR…TIQTSVTGVT (249 aa)) is interaction with EZH2. The residue at position 83 (serine 83) is a Phosphoserine. The tract at residues 110-158 (ERQKEGSLARASRASPSNARKQISRSTHSTLSKTNSKALVVGKDHESKS) is disordered. Positions 117–129 (LARASRASPSNAR) are enriched in low complexity. Lysine 130 is subject to N6,N6,N6-trimethyllysine; by EHMT2; alternate. N6,N6-dimethyllysine; by EHMT2; alternate is present on lysine 130. The residue at position 130 (lysine 130) is an N6-methyllysine; by EHMT2; alternate. Residues 133–146 (SRSTHSTLSKTNSK) show a composition bias toward polar residues. A phosphoserine mark is found at serine 165, serine 196, and serine 211. Residues 200–223 (GRTSVDGFQGESPEKLDPVDQGAE) are disordered. Positions 357 to 589 (SENNSLNPEV…DSMLKYLQRK (233 aa)) are acetyl-CoA-binding domain.

Forms multimers and multimerization is required for stable binding to chromatin. Interacts with HDAC1 and HDAC2 via its C-terminal acetyl-CoA-binding domain. Interacts with EZH2, EED, SUZ12, REST, EHMT1 and EHMT2. Part of a complex containing at least CDYL, REST, WIZ, SETB1, EHMT1 and EHMT2. Part of a complex containing at least CDYL, MIER1, MIER2, HDAC1 and HDAC2. Interacts with CHAF1A and CHAF1B; bridging the CAF-1 complex to the MCM2-7 (MCM) complex. Interacts with MCM3 and MCM5; bridging the CAF-1 complex to the MCM2-7 (MCM) complex. Interacts with EHMT2 and PRDM9; interaction only takes place when PRDM9 is bound to hotspot DNA. Highly expressed in testis (at protein level). Expressed in the hippocampus (at protein level). Expressed in the medial prefrontal cortex, prelimbic cortex, intralimbic cortex and cingulate cortex area (at protein level). Isoform 1: Expressed as 2 transcripts encoding the same protein, a ubiquitous transcript and a highly expressed testis-specific transcript.

Its subcellular location is the nucleus. It is found in the chromosome. It carries out the reaction L-lysyl-[protein] + acetyl-CoA = N(6)-acetyl-L-lysyl-[protein] + CoA + H(+). The enzyme catalyses 3-hydroxybutanoyl-CoA = (2E)-butenoyl-CoA + H2O. Chromatin reader protein that recognizes and binds histone H3 trimethylated at 'Lys-9', dimethylated at 'Lys-27' and trimethylated at 'Lys-27' (H3K9me3, H3K27me2 and H3K27me3, respectively). Part of multimeric repressive chromatin complexes, where it is required for transmission and restoration of repressive histone marks, thereby preserving the epigenetic landscape. Required for chromatin targeting and maximal enzymatic activity of Polycomb repressive complex 2 (PRC2); acts as a positive regulator of PRC2 activity by bridging the pre-existing histone H3K27me3 and newly recruited PRC2 on neighboring nucleosomes. Acts as a corepressor for REST by facilitating histone-lysine N-methyltransferase EHMT2 recruitment and H3K9 dimethylation at REST target genes for repression. Involved in X chromosome inactivation in females: recruited to Xist RNA-coated X chromosome and facilitates propagation of H3K9me2 by anchoring EHMT2. Promotes EZH2 accumulation and H3K27me3 methylation at DNA double strand breaks (DSBs), thereby facilitating transcriptional repression at sites of DNA damage and homology-directed repair of DSBs. Required for neuronal migration during brain development by repressing expression of RHOA. By repressing the expression of SCN8A, contributes to the inhibition of intrinsic neuronal excitability and epileptogenesis. In addition to acting as a chromatin reader, acts as a hydro-lyase. Shows crotonyl-coA hydratase activity by mediating the conversion of crotonyl-CoA ((2E)-butenoyl-CoA) to beta-hydroxybutyryl-CoA (3-hydroxybutanoyl-CoA), thereby acting as a negative regulator of histone crotonylation. Histone crotonylation is required during spermatogenesis; down-regulation of histone crotonylation by CDYL regulates the reactivation of sex chromosome-linked genes in round spermatids and histone replacement in elongating spermatids. By regulating histone crotonylation and trimethylation of H3K27, may be involved in stress-induced depression-like behaviors, possibly by regulating VGF expression. May have histone acetyltransferase activity; such activity is however unsure in vivo. Functionally, not able to recognize and bind histone H3K9me3, histone H3K27me2 and histone H3K27me3, due to the presence of a N-terminal extension that inactivates the chromo domain. This is Chromodomain Y-like protein from Mus musculus (Mouse).